The primary structure comprises 365 residues: Probable protein kinase At2g41970 (365 aa).

Residues 1–50 (MFCCGGADEEPAGPPANQYAAPPNKAGNPNFGGGNRGEPRNPNAPRSGAP) form a disordered region. Residues 73–354 (FGNKALIGEG…IVVKALQPLL (282 aa)) enclose the Protein kinase domain. Residues 79 to 87 (IGEGSYGRV) and Lys100 each bind ATP. Tyr146 is modified (phosphotyrosine). Asp204 acts as the Proton acceptor in catalysis. Residues Ser208 and Ser238 each carry the phosphoserine modification. Residues Thr239 and Thr244 each carry the phosphothreonine modification. Tyr252 bears the Phosphotyrosine mark.

Belongs to the protein kinase superfamily. Tyr protein kinase family.

The chain is Probable protein kinase At2g41970 from Arabidopsis thaliana (Mouse-ear cress).